A 501-amino-acid polypeptide reads, in one-letter code: Inactive cytidine monophosphate-N-acetylneuraminic acid hydroxylase (501 aa).

This sequence belongs to the CMP-Neu5Ac hydroxylase family. As to expression, widely expressed. Highly expressed in thymus. Not expressed in brain. May be expressed in adult stem cells (at protein level).

The protein localises to the cytoplasm. In terms of biological role, sialic acids are components of carbohydrate chains of glycoconjugates and are involved in cell-cell recognition and cell-pathogen interactions. That protein has no CMP-N-acetylneuraminate monooxygenase activity and is not able to convert CMP-N-acetylneuraminic acid (CMP-Neu5Ac) into its hydroxylated derivative CMP-N-glycolylneuraminic acid (CMP-Neu5Gc), a sialic acid abundantly expressed at the surface of many cells in vertebrates. However, it may play a role in Wnt signaling. This is Inactive cytidine monophosphate-N-acetylneuraminic acid hydroxylase (CMAHP) from Homo sapiens (Human).